Consider the following 168-residue polypeptide: ATP synthase subunit b (168 aa).

A helical transmembrane segment spans residues 7–26; that stretch reads FVLSNFIFTLINLWIMYWVL.

Belongs to the ATPase B chain family. As to quaternary structure, F-type ATPases have 2 components, F(1) - the catalytic core - and F(0) - the membrane proton channel. F(1) has five subunits: alpha(3), beta(3), gamma(1), delta(1), epsilon(1). F(0) has three main subunits: a(1), b(2) and c(10-14). The alpha and beta chains form an alternating ring which encloses part of the gamma chain. F(1) is attached to F(0) by a central stalk formed by the gamma and epsilon chains, while a peripheral stalk is formed by the delta and b chains.

It is found in the cell membrane. F(1)F(0) ATP synthase produces ATP from ADP in the presence of a proton or sodium gradient. F-type ATPases consist of two structural domains, F(1) containing the extramembraneous catalytic core and F(0) containing the membrane proton channel, linked together by a central stalk and a peripheral stalk. During catalysis, ATP synthesis in the catalytic domain of F(1) is coupled via a rotary mechanism of the central stalk subunits to proton translocation. Functionally, component of the F(0) channel, it forms part of the peripheral stalk, linking F(1) to F(0). This is ATP synthase subunit b from Alkaliphilus metalliredigens (strain QYMF).